We begin with the raw amino-acid sequence, 342 residues long: Foldase protein PrsA (342 aa).

An N-terminal signal peptide occupies residues 1–22; it reads MVSVKKIVASALVGVLMFSAVG. C23 is lipidated: N-palmitoyl cysteine. C23 carries S-diacylglycerol cysteine lipidation. Residues 189–284 form the PpiC domain; sequence DSGVLTKHLL…FGYHIIQAGA (96 aa).

It belongs to the PrsA family.

It is found in the cell membrane. The catalysed reaction is [protein]-peptidylproline (omega=180) = [protein]-peptidylproline (omega=0). In terms of biological role, plays a major role in protein secretion by helping the post-translocational extracellular folding of several secreted proteins. The protein is Foldase protein PrsA of Clostridium perfringens (strain ATCC 13124 / DSM 756 / JCM 1290 / NCIMB 6125 / NCTC 8237 / Type A).